Here is a 1541-residue protein sequence, read N- to C-terminus: Multiple epidermal growth factor-like domains protein 6 (1541 aa).

Residues 1–30 (MSFLEEARAAGRAVVLALVLLLLPAVPVGA) form the signal peptide. The EMI domain maps to 44-125 (MPHVCAEQEL…QQPDEEGCLS (82 aa)). 15 disulfides stabilise this stretch: Cys48/Cys111, Cys77/Cys83, Cys110/Cys123, Cys128/Cys139, Cys133/Cys147, Cys149/Cys158, Cys165/Cys176, Cys172/Cys185, Cys187/Cys200, Cys242/Cys255, Cys248/Cys268, Cys270/Cys283, Cys289/Cys300, Cys296/Cys309, and Cys311/Cys324. The EGF-like 1 domain maps to 124-159 (LSAECSASLCFHGGRCVPGSAQPCHCPPGFQGPRCQ). Residues 161–201 (DVDECRTHNGGCQHRCVNTPGSYLCECKPGFRLHTDSRTCL) enclose the EGF-like 2; calcium-binding domain. EGF-like domains are found at residues 206–242 (CALG…GRHC) and 238–284 (DGRH…KACE). Residue Asn252 is glycosylated (N-linked (GlcNAc...) asparagine). The 41-residue stretch at 285 to 325 (DVDECAAGLAQCAHGCLNTQGSFKCVCHAGYELGADGRQCY) folds into the EGF-like 5; calcium-binding domain. EGF-like domains follow at residues 335–370 (CEAN…QRTC) and 375–411 (DCAD…CGCE). The 41-residue stretch at 412–452 (DVDECASSRGGCEHHCTNLAGSFQCSCEAGYRLHEDRRGCS) folds into the EGF-like 8; calcium-binding domain. 12 disulfide bridges follow: Cys416/Cys427, Cys423/Cys436, Cys438/Cys451, Cys520/Cys533, Cys527/Cys540, Cys542/Cys551, Cys564/Cys576, Cys570/Cys583, Cys585/Cys594, Cys607/Cys619, Cys613/Cys626, and Cys628/Cys637. EGF-like domains lie at 516-552 (FGHD…LICN), 560-595 (FGKN…TNCE), 603-638 (YGKH…RFCH), 736-770 (FGVN…EDCE), 783-814 (QEIC…SRCQ), 822-857 (YGPS…FSCQ), 865-901 (WGPD…PRCE), 909-944 (FGPG…TFCE), 955-987 (DCRS…PRCA), 995-1030 (YGHN…PSCL), 1038-1073 (YGDN…LACE), 1081-1116 (VRAG…DKCQ), 1124-1159 (FGEA…SGCE), 1211-1246 (YGPG…TDCN), 1254-1289 (FGPN…VRCE), 1297-1332 (FGVG…RHCE), 1345-1375 (HLEC…QACE), 1383-1418 (HGAG…HFCE), and 1469-1504 (FGPS…PTCR). Asn739 carries an N-linked (GlcNAc...) asparagine glycan. 15 disulfide bridges follow: Cys740/Cys751, Cys744/Cys758, Cys760/Cys769, Cys786/Cys795, Cys789/Cys802, Cys804/Cys813, Cys826/Cys838, Cys832/Cys845, Cys847/Cys856, Cys869/Cys882, Cys873/Cys889, Cys891/Cys900, Cys913/Cys925, Cys919/Cys932, and Cys934/Cys943. Disulfide bonds link Cys999–Cys1011, Cys1005–Cys1018, Cys1020–Cys1029, Cys1042–Cys1054, Cys1048–Cys1061, Cys1063–Cys1072, Cys1085–Cys1097, Cys1091–Cys1104, Cys1106–Cys1115, Cys1128–Cys1140, Cys1134–Cys1147, Cys1149–Cys1158, Cys1215–Cys1227, Cys1221–Cys1234, Cys1236–Cys1245, Cys1258–Cys1270, Cys1264–Cys1277, Cys1279–Cys1288, Cys1301–Cys1313, Cys1307–Cys1320, Cys1322–Cys1331, Cys1348–Cys1356, Cys1350–Cys1363, Cys1365–Cys1374, Cys1387–Cys1399, Cys1393–Cys1406, Cys1408–Cys1417, Cys1473–Cys1485, Cys1479–Cys1492, and Cys1494–Cys1503. The tract at residues 1509-1541 (LRLPENPSLAQGSAGTLPASSRPTSRSGGPARH) is disordered. Positions 1516–1535 (SLAQGSAGTLPASSRPTSRS) are enriched in polar residues.

Its subcellular location is the secreted. This Homo sapiens (Human) protein is Multiple epidermal growth factor-like domains protein 6 (MEGF6).